We begin with the raw amino-acid sequence, 404 residues long: Dihydrosphingosine 1-phosphate phosphatase YSR3 (404 aa).

The Lumenal segment spans residues 1-86 (MTIIQTVTEL…PFRDVYFKYT (86 aa)). Asparagine 62 carries an N-linked (GlcNAc...) asparagine glycan. The chain crosses the membrane as a helical span at residues 87–107 (SLMGSHMFYVIVLPMPVWLGY). Residues 108-113 (RDLTRD) are Cytoplasmic-facing. Residues 114-134 (MIYVLGYSIYLSGYLKDYWCL) form a helical membrane-spanning segment. Positions 129–137 (KDYWCLPRP) are phosphatase sequence motif I. Topologically, residues 135-154 (PRPKSPPVDRITLSEYTTKE) are lumenal. A helical transmembrane segment spans residues 155–176 (YGAPSSHSANATAVSLLFFWRI). A phosphatase sequence motif II region spans residues 158 to 161 (PSSH). Residue histidine 161 is the Proton donor of the active site. Topologically, residues 177–182 (CLSDTL) are cytoplasmic. The chain crosses the membrane as a helical span at residues 183–203 (VWPTKLLLLSLVIFYYLTLVF). The Lumenal segment spans residues 204 to 215 (GRVYCGMHGMLD). The tract at residues 204–215 (GRVYCGMHGMLD) is phosphatase sequence motif III. Histidine 211 (nucleophile) is an active-site residue. A helical transmembrane segment spans residues 216–236 (LFSGAAVGAICFFIRIWVVHA). Over 237–241 (LRNFQ) the chain is Cytoplasmic. Residues 242-262 (IGEHLWFPLLSVAWGLFILFN) form a helical membrane-spanning segment. The Lumenal segment spans residues 263-319 (HVRPIDECPCFEDSVAFIGVVSGLDCSDWLTERYGWNLVCSRYASCGSKVFLRPLVG). Residues 320–340 (VASVIVWKDVISKTAVYTLLI) traverse the membrane as a helical segment. Over 341 to 379 (KLLRFHDDRSEKVHFHNETSEEEECLLYSGVSKVEIVGR) the chain is Cytoplasmic. Residues 380-400 (FLIYAGIPTTVFLLCPVFFTW) form a helical membrane-spanning segment. The Lumenal segment spans residues 401–404 (TNLR).

The protein belongs to the type 2 lipid phosphate phosphatase family.

It localises to the endoplasmic reticulum membrane. The catalysed reaction is sphinganine 1-phosphate + H2O = sphinganine + phosphate. Functionally, dihydrosphingosine 1-phosphate phosphatase required for efficient ceramide synthesis from exogenous sphingoid bases. Involved in endocytosis and calcium-mediated signaling. This Saccharomyces cerevisiae (strain ATCC 204508 / S288c) (Baker's yeast) protein is Dihydrosphingosine 1-phosphate phosphatase YSR3.